The sequence spans 291 residues: 33 kDa chaperonin (291 aa).

Cystine bridges form between C229–C231 and C262–C265.

The protein belongs to the HSP33 family. Post-translationally, under oxidizing conditions two disulfide bonds are formed involving the reactive cysteines. Under reducing conditions zinc is bound to the reactive cysteines and the protein is inactive.

It localises to the cytoplasm. In terms of biological role, redox regulated molecular chaperone. Protects both thermally unfolding and oxidatively damaged proteins from irreversible aggregation. Plays an important role in the bacterial defense system toward oxidative stress. This is 33 kDa chaperonin from Aliivibrio salmonicida (strain LFI1238) (Vibrio salmonicida (strain LFI1238)).